We begin with the raw amino-acid sequence, 223 residues long: Small ribosomal subunit protein uS3 (223 aa).

The 79-residue stretch at 39–117 folds into the KH type-2 domain; the sequence is IREFLRKKPS…RPELNAKLVA (79 aa).

It belongs to the universal ribosomal protein uS3 family. As to quaternary structure, part of the 30S ribosomal subunit. Forms a tight complex with proteins S10 and S14.

In terms of biological role, binds the lower part of the 30S subunit head. Binds mRNA in the 70S ribosome, positioning it for translation. The protein is Small ribosomal subunit protein uS3 of Chlamydia abortus (strain DSM 27085 / S26/3) (Chlamydophila abortus).